We begin with the raw amino-acid sequence, 533 residues long: Na(+)/H(+) antiporter NhaB (533 aa).

10 consecutive transmembrane segments (helical) span residues 28-50 (FLII…VLVL), 67-87 (PGGL…SQVL), 96-116 (VLLL…LLLF), 131-165 (VSLM…FYSI), 254-274 (VPVL…GIFG), 316-336 (LIAG…SVII), 364-384 (LAVF…APVI), 396-416 (LVIF…VFVG), 454-474 (ATPN…APLI), and 481-501 (MVWM…MAIQ).

Belongs to the NhaB Na(+)/H(+) (TC 2.A.34) antiporter family.

It is found in the cell inner membrane. It catalyses the reaction 2 Na(+)(in) + 3 H(+)(out) = 2 Na(+)(out) + 3 H(+)(in). Functionally, na(+)/H(+) antiporter that extrudes sodium in exchange for external protons. The sequence is that of Na(+)/H(+) antiporter NhaB from Shewanella baltica (strain OS195).